The chain runs to 171 residues: Small ribosomal subunit protein uS5 (171 aa).

One can recognise an S5 DRBM domain in the interval 16-79 (LVERLVTVDR…EAAKRNMITV (64 aa)).

This sequence belongs to the universal ribosomal protein uS5 family. Part of the 30S ribosomal subunit. Contacts proteins S4 and S8.

Its function is as follows. With S4 and S12 plays an important role in translational accuracy. Functionally, located at the back of the 30S subunit body where it stabilizes the conformation of the head with respect to the body. This Psychrobacter arcticus (strain DSM 17307 / VKM B-2377 / 273-4) protein is Small ribosomal subunit protein uS5.